The sequence spans 155 residues: Large ribosomal subunit protein uL30 (155 aa).

It belongs to the universal ribosomal protein uL30 family. Part of the 50S ribosomal subunit.

The chain is Large ribosomal subunit protein uL30 from Pyrococcus furiosus (strain ATCC 43587 / DSM 3638 / JCM 8422 / Vc1).